The sequence spans 138 residues: Cofilin (138 aa).

An ADF-H domain is found at 2-136 (SSGVQPTQEC…TKDALFEKAT (135 aa)).

Belongs to the actin-binding proteins ADF family.

Its subcellular location is the cytoplasm. It localises to the cytoskeleton. The protein resides in the nucleus matrix. Controls reversibly actin polymerization and depolymerization in a pH-sensitive manner. It has the ability to bind G- and F-actin in a 1:1 ratio of cofilin to actin. Binding to F-actin is regulated by tropomyosin. It is the major component of intranuclear and cytoplasmic actin rods. Required for accumulation of actin at the cell division site via depolymerizing actin at the cell ends. In association with myosin II has a role in the assembly of the contractile ring via severing actin filaments. Involved in the maintenance of the contractile ring once formed. In association with profilin and capping protein, has a role in the mitotic reorganization of the actin cytoskeleton. The chain is Cofilin (COF1) from Cryptococcus neoformans var. neoformans serotype D (strain B-3501A) (Filobasidiella neoformans).